We begin with the raw amino-acid sequence, 318 residues long: D-alanine--D-alanine ligase (318 aa).

One can recognise an ATP-grasp domain in the interval 117-315 (KQVWLSLGLS…FETLVWRVLE (199 aa)). Position 146–201 (146–201 (ARQIGLPIIVKPANEGSSVGVSRVFDQAQLEEAVTLAARYDGALLMEQLIEGDELT)) interacts with ATP. The Mg(2+) site is built by Asp-268, Glu-282, and Asn-284.

The protein belongs to the D-alanine--D-alanine ligase family. Mg(2+) is required as a cofactor. Mn(2+) serves as cofactor.

It localises to the cytoplasm. The catalysed reaction is 2 D-alanine + ATP = D-alanyl-D-alanine + ADP + phosphate + H(+). It functions in the pathway cell wall biogenesis; peptidoglycan biosynthesis. Functionally, cell wall formation. This chain is D-alanine--D-alanine ligase, found in Xanthomonas axonopodis pv. citri (strain 306).